A 196-amino-acid polypeptide reads, in one-letter code: Probable peptidyl-prolyl cis-trans isomerase (196 aa).

A signal peptide spans 1–26; that stretch reads MSFIRSALAAAAFVALSIGAVQTASA. The region spanning 29-194 is the PPIase cyclophilin-type domain; that stretch reads PENTVILKLK…KIIKATIEAD (166 aa).

The protein belongs to the cyclophilin-type PPIase family.

It is found in the periplasm. It carries out the reaction [protein]-peptidylproline (omega=180) = [protein]-peptidylproline (omega=0). Functionally, PPIases accelerate the folding of proteins. It catalyzes the cis-trans isomerization of proline imidic peptide bonds in oligopeptides. The sequence is that of Probable peptidyl-prolyl cis-trans isomerase (ppi) from Brucella melitensis biotype 1 (strain ATCC 23456 / CCUG 17765 / NCTC 10094 / 16M).